The chain runs to 42 residues: Small protein MntS (42 aa).

It localises to the cytoplasm. In terms of biological role, required for repression of mntH by MntR. May function as a chaperone that makes manganese more available by delivering it to the necessary cellular locations when manganese is limiting. The chain is Small protein MntS (mntS) from Escherichia coli (strain K12).